We begin with the raw amino-acid sequence, 627 residues long: Hemocyanin B chain (627 aa).

Positions 173, 177, and 204 each coordinate Cu cation. N-linked (GlcNAc...) asparagine glycosylation is found at asparagine 312 and asparagine 316. The Cu cation site is built by histidine 324, histidine 328, and histidine 364. A disulfide bridge links cysteine 534 with cysteine 582.

This sequence belongs to the tyrosinase family. Hemocyanin subfamily. In terms of assembly, tarantula hemocyanin is a 24-chain polymer with seven different chains identified. Hemolymph.

It is found in the secreted. Its subcellular location is the extracellular space. Its function is as follows. Hemocyanins are copper-containing oxygen carriers occurring freely dissolved in the hemolymph of many mollusks and arthropods. The sequence is that of Hemocyanin B chain (HCB) from Aphonopelma sp. (American tarantula).